We begin with the raw amino-acid sequence, 361 residues long: Holliday junction branch migration complex subunit RuvB (361 aa).

The segment at 1–183 (MAEPSLVAAG…FGFTGHLEFY (183 aa)) is large ATPase domain (RuvB-L). Residues Leu22, Arg23, Gly64, Lys67, Thr68, Thr69, 130 to 132 (EDF), Arg173, Tyr183, and Arg220 each bind ATP. Thr68 serves as a coordination point for Mg(2+). The tract at residues 184–254 (SVPELELVLR…SASAALDMYE (71 aa)) is small ATPAse domain (RuvB-S). The segment at 257–361 (KKGLDRLDRS…VTGEWAPESQ (105 aa)) is head domain (RuvB-H). The DNA site is built by Arg312 and Arg317.

It belongs to the RuvB family. Homohexamer. Forms an RuvA(8)-RuvB(12)-Holliday junction (HJ) complex. HJ DNA is sandwiched between 2 RuvA tetramers; dsDNA enters through RuvA and exits via RuvB. An RuvB hexamer assembles on each DNA strand where it exits the tetramer. Each RuvB hexamer is contacted by two RuvA subunits (via domain III) on 2 adjacent RuvB subunits; this complex drives branch migration. In the full resolvosome a probable DNA-RuvA(4)-RuvB(12)-RuvC(2) complex forms which resolves the HJ.

It localises to the cytoplasm. The enzyme catalyses ATP + H2O = ADP + phosphate + H(+). Functionally, the RuvA-RuvB-RuvC complex processes Holliday junction (HJ) DNA during genetic recombination and DNA repair, while the RuvA-RuvB complex plays an important role in the rescue of blocked DNA replication forks via replication fork reversal (RFR). RuvA specifically binds to HJ cruciform DNA, conferring on it an open structure. The RuvB hexamer acts as an ATP-dependent pump, pulling dsDNA into and through the RuvAB complex. RuvB forms 2 homohexamers on either side of HJ DNA bound by 1 or 2 RuvA tetramers; 4 subunits per hexamer contact DNA at a time. Coordinated motions by a converter formed by DNA-disengaged RuvB subunits stimulates ATP hydrolysis and nucleotide exchange. Immobilization of the converter enables RuvB to convert the ATP-contained energy into a lever motion, pulling 2 nucleotides of DNA out of the RuvA tetramer per ATP hydrolyzed, thus driving DNA branch migration. The RuvB motors rotate together with the DNA substrate, which together with the progressing nucleotide cycle form the mechanistic basis for DNA recombination by continuous HJ branch migration. Branch migration allows RuvC to scan DNA until it finds its consensus sequence, where it cleaves and resolves cruciform DNA. The protein is Holliday junction branch migration complex subunit RuvB of Pseudarthrobacter chlorophenolicus (strain ATCC 700700 / DSM 12829 / CIP 107037 / JCM 12360 / KCTC 9906 / NCIMB 13794 / A6) (Arthrobacter chlorophenolicus).